The primary structure comprises 391 residues: Cyclin-A1 (391 aa).

This sequence belongs to the cyclin family. Cyclin AB subfamily. As to quaternary structure, interacts with the CDK1 and the CDK2 protein kinases to form a serine/threonine kinase holoenzyme complex. The cyclin subunit imparts substrate specificity to the complex.

Its subcellular location is the nucleus. May be involved in the control of the cell cycle at the G1/S (start) and G2/M (mitosis) transitions. The polypeptide is Cyclin-A1 (ccna1) (Carassius auratus (Goldfish)).